The chain runs to 682 residues: Methionine--tRNA ligase (682 aa).

A 'HIGH' region motif is present at residues 15 to 25; the sequence is PYANGAIHLGH. Positions 146, 149, 159, and 162 each coordinate Zn(2+). A 'KMSKS' region motif is present at residues 331 to 335; sequence KMSKS. Lysine 334 serves as a coordination point for ATP. Positions 580-682 constitute a tRNA-binding domain; that stretch reads DFAKLDMRVA…SGVTAGMQVK (103 aa).

It belongs to the class-I aminoacyl-tRNA synthetase family. MetG type 1 subfamily. Homodimer. It depends on Zn(2+) as a cofactor.

The protein localises to the cytoplasm. The enzyme catalyses tRNA(Met) + L-methionine + ATP = L-methionyl-tRNA(Met) + AMP + diphosphate. Its function is as follows. Is required not only for elongation of protein synthesis but also for the initiation of all mRNA translation through initiator tRNA(fMet) aminoacylation. In Haemophilus influenzae (strain ATCC 51907 / DSM 11121 / KW20 / Rd), this protein is Methionine--tRNA ligase.